Reading from the N-terminus, the 533-residue chain is CTP synthase (533 aa).

The tract at residues 1–270 is amidoligase domain; sequence MVHLAKYIVV…GDYIVRRIEL (270 aa). Ser-16 is a binding site for CTP. Residue Ser-16 participates in UTP binding. 17–22 is a binding site for ATP; the sequence is SIGKGI. Tyr-57 contacts L-glutamine. ATP is bound at residue Asp-74. Mg(2+)-binding residues include Asp-74 and Glu-144. CTP contacts are provided by residues 151–153, 191–196, and Lys-227; these read DIE and KTKPTQ. UTP-binding positions include 191–196 and Lys-227; that span reads KTKPTQ. The Glutamine amidotransferase type-1 domain maps to 303-533; it reads YVELEDSYIS…FLRAALERSR (231 aa). Position 355 (Gly-355) interacts with L-glutamine. Cys-382 serves as the catalytic Nucleophile; for glutamine hydrolysis. L-glutamine contacts are provided by residues 383 to 386, Glu-405, and Arg-462; that span reads LGMQ. Residues His-507 and Glu-509 contribute to the active site.

The protein belongs to the CTP synthase family. As to quaternary structure, homotetramer.

It catalyses the reaction UTP + L-glutamine + ATP + H2O = CTP + L-glutamate + ADP + phosphate + 2 H(+). The enzyme catalyses L-glutamine + H2O = L-glutamate + NH4(+). It carries out the reaction UTP + NH4(+) + ATP = CTP + ADP + phosphate + 2 H(+). It participates in pyrimidine metabolism; CTP biosynthesis via de novo pathway; CTP from UDP: step 2/2. With respect to regulation, allosterically activated by GTP, when glutamine is the substrate; GTP has no effect on the reaction when ammonia is the substrate. The allosteric effector GTP functions by stabilizing the protein conformation that binds the tetrahedral intermediate(s) formed during glutamine hydrolysis. Inhibited by the product CTP, via allosteric rather than competitive inhibition. Functionally, catalyzes the ATP-dependent amination of UTP to CTP with either L-glutamine or ammonia as the source of nitrogen. Regulates intracellular CTP levels through interactions with the four ribonucleotide triphosphates. The sequence is that of CTP synthase from Methanothermobacter thermautotrophicus (strain ATCC 29096 / DSM 1053 / JCM 10044 / NBRC 100330 / Delta H) (Methanobacterium thermoautotrophicum).